Reading from the N-terminus, the 186-residue chain is ATP-dependent protease subunit HslV (186 aa).

The active site involves Thr13. Residues Ala167, Cys170, and Thr173 each coordinate Na(+).

The protein belongs to the peptidase T1B family. HslV subfamily. A double ring-shaped homohexamer of HslV is capped on each side by a ring-shaped HslU homohexamer. The assembly of the HslU/HslV complex is dependent on binding of ATP.

The protein localises to the cytoplasm. It catalyses the reaction ATP-dependent cleavage of peptide bonds with broad specificity.. Its activity is regulated as follows. Allosterically activated by HslU binding. Its function is as follows. Protease subunit of a proteasome-like degradation complex believed to be a general protein degrading machinery. The chain is ATP-dependent protease subunit HslV from Allorhizobium ampelinum (strain ATCC BAA-846 / DSM 112012 / S4) (Agrobacterium vitis (strain S4)).